The following is a 284-amino-acid chain: Bifunctional protein FolD (284 aa).

NADP(+) is bound by residues 165–167 (GRG), Thr192, and Val233.

This sequence belongs to the tetrahydrofolate dehydrogenase/cyclohydrolase family. Homodimer.

The enzyme catalyses (6R)-5,10-methylene-5,6,7,8-tetrahydrofolate + NADP(+) = (6R)-5,10-methenyltetrahydrofolate + NADPH. It carries out the reaction (6R)-5,10-methenyltetrahydrofolate + H2O = (6R)-10-formyltetrahydrofolate + H(+). It participates in one-carbon metabolism; tetrahydrofolate interconversion. Its function is as follows. Catalyzes the oxidation of 5,10-methylenetetrahydrofolate to 5,10-methenyltetrahydrofolate and then the hydrolysis of 5,10-methenyltetrahydrofolate to 10-formyltetrahydrofolate. In Corynebacterium efficiens (strain DSM 44549 / YS-314 / AJ 12310 / JCM 11189 / NBRC 100395), this protein is Bifunctional protein FolD.